A 526-amino-acid chain; its full sequence is ATP synthase subunit alpha (526 aa).

171-178 (GDRQTGKT) is a binding site for ATP.

It belongs to the ATPase alpha/beta chains family. F-type ATPases have 2 components, CF(1) - the catalytic core - and CF(0) - the membrane proton channel. CF(1) has five subunits: alpha(3), beta(3), gamma(1), delta(1), epsilon(1). CF(0) has four main subunits: a, b, b' and c.

It localises to the cell inner membrane. It catalyses the reaction ATP + H2O + 4 H(+)(in) = ADP + phosphate + 5 H(+)(out). In terms of biological role, produces ATP from ADP in the presence of a proton gradient across the membrane. The alpha chain is a regulatory subunit. This Pelodictyon phaeoclathratiforme (strain DSM 5477 / BU-1) protein is ATP synthase subunit alpha.